A 505-amino-acid chain; its full sequence is Methylmalonyl-CoA carboxyltransferase 5S subunit (505 aa).

The 263-residue stretch at 14-276 (VGITELVLRD…TTNLDYDRLH (263 aa)) folds into the Pyruvate carboxyltransferase domain. Residues 22–26 (RDAHQ), alanine 59, and lysine 184 each bind substrate. Position 23 (aspartate 23) interacts with Co(2+). Positions 184, 215, and 217 each coordinate Co(2+). Lysine 184 carries the post-translational modification N6-carboxylysine; partial.

As to quaternary structure, homodimer. Transcarboxylase is composed of three subunits: 1.3S, 5S, and 12S. The core of the enzyme is composed of six 12S subunits. On each side of the core there are three pairs of 5S subunits. Each 5S dimer is attached to the core by two 1.3S subunits. Thus the total number of chains is 30 (6 + 12 + 12). It depends on Co(2+) as a cofactor. Post-translationally, lys-184 is carboxylated in the free enzyme and helps to coordinate the cobalt ion. Lys-184 is partially carboxylated in the complex with pyruvate, but is not carboxylated in the oxaloacetate-bound form.

It carries out the reaction (S)-methylmalonyl-CoA + pyruvate = propanoyl-CoA + oxaloacetate. In terms of biological role, the 5S subunit specifically catalyzes the transfer of the carboxyl group from biotin of the 1.3S subunit to pyruvate to form oxaloacetate and 1.3S biotin. This is Methylmalonyl-CoA carboxyltransferase 5S subunit from Propionibacterium freudenreichii subsp. shermanii.